Consider the following 748-residue polypeptide: Catalase-peroxidase (748 aa).

Residues 92 to 238 (WHSAGTYRIG…LAAVQMGLIY (147 aa)) constitute a cross-link (tryptophyl-tyrosyl-methioninium (Trp-Tyr) (with M-264)). Residue His-93 is the Proton acceptor of the active site. The segment at residues 238-264 (YVNPEGPDGNPDPIASARDIRDTFARM) is a cross-link (tryptophyl-tyrosyl-methioninium (Tyr-Met) (with W-92)). His-279 provides a ligand contact to heme b.

It belongs to the peroxidase family. Peroxidase/catalase subfamily. As to quaternary structure, homodimer or homotetramer. Requires heme b as cofactor. In terms of processing, formation of the three residue Trp-Tyr-Met cross-link is important for the catalase, but not the peroxidase activity of the enzyme.

The enzyme catalyses H2O2 + AH2 = A + 2 H2O. The catalysed reaction is 2 H2O2 = O2 + 2 H2O. Bifunctional enzyme with both catalase and broad-spectrum peroxidase activity. The sequence is that of Catalase-peroxidase from Xanthomonas axonopodis pv. citri (strain 306).